The sequence spans 229 residues: Protein ras-2 (229 aa).

15-22 (GDGGVGKT) is a binding site for GTP. The Effector region motif lies at 37-45 (YDPTIEDSY). 62–66 (DTAGQ) is a GTP binding site. The tract at residues 109–132 (KESTSSPSAYPGSSPLAATNPSAP) is disordered. The segment covering 111-126 (STSSPSAYPGSSPLAA) has biased composition (low complexity). 140–143 (NKSD) contacts GTP. A disordered region spans residues 188 to 229 (LRKQRQQGQSTPRALPPSGNSKSEKYSGTEKPKRPRGKCLII). The segment covering 209 to 219 (KSEKYSGTEKP) has biased composition (basic and acidic residues). The span at 220-229 (KRPRGKCLII) shows a compositional bias: basic residues. Cysteine methyl ester is present on C226. A lipid anchor (S-farnesyl cysteine) is attached at C226. A propeptide spans 227-229 (LII) (removed in mature form).

The protein belongs to the small GTPase superfamily. Ras family.

The protein localises to the cell membrane. The enzyme catalyses GTP + H2O = GDP + phosphate + H(+). Functionally, ras proteins bind GDP/GTP and possess intrinsic GTPase activity. The chain is Protein ras-2 (ras-2) from Neurospora crassa (strain ATCC 24698 / 74-OR23-1A / CBS 708.71 / DSM 1257 / FGSC 987).